The chain runs to 366 residues: MAGNTFGQIFTVTTFGESHGAGLGCIIDGCPPGLELSEADIQFDLDRRKPGTSRHVTQRREADQVEILSGVFEGKTTGTPIALLIRNTNQRSKDYGNIATAFRPGHADYTYWHKYGTRDYRGGGRSSARETAARVAAGAVAKKWLKEKFGTEITAYVTQVGEKKIRFEGSEHISQNPFFAANQSQIAELEHYMDGVRKSLDSVGAKLHIEAANVPVGLGEPVFDRLDAEIAYAMMGINAVKGVEIGAGFDSVTQRGSEHGDELTPQGFLSNHSGGILGGISTGQDICVNIAIKPTSSIATPRRSIDIHGNPVELATRGRHDPCVGLRAAPIAEAMLALVLIDHALRHRAQNADVAADTPDISRSDK.

The NADP(+) site is built by arginine 48 and arginine 54. FMN is bound by residues 125–127, 238–239, glycine 278, 293–297, and arginine 319; these read RSS, NA, and KPTSS.

The protein belongs to the chorismate synthase family. As to quaternary structure, homotetramer. FMNH2 is required as a cofactor.

It catalyses the reaction 5-O-(1-carboxyvinyl)-3-phosphoshikimate = chorismate + phosphate. The protein operates within metabolic intermediate biosynthesis; chorismate biosynthesis; chorismate from D-erythrose 4-phosphate and phosphoenolpyruvate: step 7/7. Its function is as follows. Catalyzes the anti-1,4-elimination of the C-3 phosphate and the C-6 proR hydrogen from 5-enolpyruvylshikimate-3-phosphate (EPSP) to yield chorismate, which is the branch point compound that serves as the starting substrate for the three terminal pathways of aromatic amino acid biosynthesis. This reaction introduces a second double bond into the aromatic ring system. The chain is Chorismate synthase from Neisseria gonorrhoeae (strain NCCP11945).